We begin with the raw amino-acid sequence, 62 residues long: U10-buthitoxin-Hj1a (62 aa).

The N-terminal stretch at 1 to 22 is a signal peptide; it reads MQKIFIILVLFCILKFNVDVEG. 3 cysteine pairs are disulfide-bonded: Cys-28–Cys-46, Cys-33–Cys-59, and Cys-37–Cys-61.

The protein belongs to the short scorpion toxin superfamily. Potassium channel inhibitor family. Alpha-KTx 23 subfamily. As to expression, expressed by the venom gland.

The protein resides in the secreted. Its function is as follows. May block potassium channels. The sequence is that of U10-buthitoxin-Hj1a from Hottentotta judaicus (Black scorpion).